A 150-amino-acid chain; its full sequence is Ribosomal RNA large subunit methyltransferase H (150 aa).

S-adenosyl-L-methionine contacts are provided by residues Ala100 and 118–123; that span reads LSEMTF.

This sequence belongs to the RNA methyltransferase RlmH family. As to quaternary structure, homodimer.

The protein localises to the cytoplasm. It carries out the reaction pseudouridine(1915) in 23S rRNA + S-adenosyl-L-methionine = N(3)-methylpseudouridine(1915) in 23S rRNA + S-adenosyl-L-homocysteine + H(+). In terms of biological role, specifically methylates the pseudouridine at position 1915 (m3Psi1915) in 23S rRNA. The protein is Ribosomal RNA large subunit methyltransferase H of Helicobacter pylori (strain J99 / ATCC 700824) (Campylobacter pylori J99).